A 198-amino-acid chain; its full sequence is Inner membrane-spanning protein YciB (198 aa).

5 helical membrane-spanning segments follow: residues 36 to 56 (IFSA…ILYL), 67 to 87 (LTLV…SETF), 90 to 110 (WKAP…HFIG), 133 to 153 (LNIA…YVAF), and 162 to 182 (FKVF…GIYL).

Belongs to the YciB family.

The protein localises to the cell inner membrane. Its function is as follows. Plays a role in cell envelope biogenesis, maintenance of cell envelope integrity and membrane homeostasis. The sequence is that of Inner membrane-spanning protein YciB from Pseudomonas savastanoi pv. phaseolicola (strain 1448A / Race 6) (Pseudomonas syringae pv. phaseolicola (strain 1448A / Race 6)).